Reading from the N-terminus, the 822-residue chain is General transcription factor 3C polypeptide 4 (822 aa).

Residue Met-1 is modified to N-acetylmethionine. Positions 1-41 (MNTADQARVGPADDGPAPSGEEEGEGGGEAGGKEPAADAAP) are disordered. Ser-19 is modified (phosphoserine). A Glycyl lysine isopeptide (Lys-Gly) (interchain with G-Cter in SUMO2) cross-link involves residue Lys-225. Residues Ser-604 and Ser-611 each carry the phosphoserine modification. The segment at 608-663 (LVDSPGMGNADDEQQEEGTSSKQVVKQGLQERSKEGDVEEPTDDSLPTTGDAGGRE) is disordered. Lys-629 is covalently cross-linked (Glycyl lysine isopeptide (Lys-Gly) (interchain with G-Cter in SUMO2)). Ser-652 is subject to Phosphoserine.

The protein belongs to the TFIIIC subunit 4 family. As to quaternary structure, part of the TFIIIC subcomplex TFIIIC2, consisting of six subunits, GTF3C1, GTF3C2, GTF3C3, GTF3C4, GTF3C5 and GTF3C6. Interacts with BRF1, GTF3C1, GTF3C2, GTF3C5, GTF3C6, POLR3C and POLR3F.

It localises to the nucleus. The catalysed reaction is L-lysyl-[protein] + acetyl-CoA = N(6)-acetyl-L-lysyl-[protein] + CoA + H(+). In terms of biological role, essential for RNA polymerase III to make a number of small nuclear and cytoplasmic RNAs, including 5S RNA, tRNA, and adenovirus-associated (VA) RNA of both cellular and viral origin. Has histone acetyltransferase activity (HAT) with unique specificity for free and nucleosomal H3. May cooperate with GTF3C5 in facilitating the recruitment of TFIIIB and RNA polymerase through direct interactions with BRF1, POLR3C and POLR3F. May be localized close to the A box. The protein is General transcription factor 3C polypeptide 4 (GTF3C4) of Homo sapiens (Human).